The chain runs to 78 residues: Small ribosomal subunit protein bS20 (78 aa).

The protein belongs to the bacterial ribosomal protein bS20 family.

Functionally, binds directly to 16S ribosomal RNA. The protein is Small ribosomal subunit protein bS20 of Streptococcus pneumoniae serotype 4 (strain ATCC BAA-334 / TIGR4).